A 149-amino-acid chain; its full sequence is Protegrin-4 (149 aa).

Positions 1 to 29 are cleaved as a signal peptide; it reads METQRASLCLGRWSLWLLLLALVVPSASA. A propeptide spanning residues 30-130 is cleaved from the precursor; that stretch reads QALSYREAVL…DITCNEVQGV (101 aa). The interval 61–80 is disordered; that stretch reads DQPPKADEDPGTPKPVSFTV. 4 disulfides stabilise this stretch: C85-C96, C107-C124, C136-C145, and C138-C143. Arginine amide is present on R148.

The protein belongs to the cathelicidin family.

The protein localises to the secreted. Microbicidal activity. This Sus scrofa (Pig) protein is Protegrin-4 (NPG4).